The chain runs to 476 residues: MDNIDNKYNPQLCKIFLAISDLIFFNLALWFSLGCVYFIFDQVQRFIPQDQLDTRVITHFILSVVCVGWFWIRLRHYTYRKPFWYELKEIFRTIVIFAIFDLALIAFTKWQFSRYVWVFCWTFALILVPFFRALTKHLLNKLGIWKKKTIILGSGQNARGAYSALQSEEMMGFDVIAFFDTDASDAEINMLPVIKDTEIIWDLNRTGDVHYILAYEYTELEKTHFWLRELSKHHCRSVTVVPSFRGLPLYNTDMSFIFSHEVMLLRIQNNLAKRSSRFLKRTFDIVCSIMILIIASPLMIYLWYKVTRDGGPAIYGHQRVGRHGKLFPCYKFRSMVMNSQEVLKELLANDPIARAEWEKDFKLKNDPRITAVGRFIRKTSLDELPQLFNVLKGDMSLVGPRPIVSDELERYCDDVDYYLMAKPGMTGLWQVSGRNDVDYDTRVYFDSWYVKNWTLWNDIAILFKTAKVVLRRDGAY.

Helical transmembrane passes span 15-35, 52-72, 93-113, 115-135, and 283-303; these read IFLAISDLIFFNLALWFSLGC, LDTRVITHFILSVVCVGWFWI, TIVIFAIFDLALIAFTKWQFS, YVWVFCWTFALILVPFFRALT, and FDIVCSIMILIIASPLMIYLW. Topologically, residues 304 to 476 are cytoplasmic; it reads YKVTRDGGPA…KVVLRRDGAY (173 aa).

This sequence belongs to the bacterial sugar transferase family.

Its subcellular location is the cell inner membrane. The enzyme catalyses di-trans,octa-cis-undecaprenyl phosphate + UDP-alpha-D-galactose = alpha-D-galactosyl-di-trans,octa-cis-undecaprenyl diphosphate + UMP. The protein operates within bacterial outer membrane biogenesis; LPS O-antigen biosynthesis. In terms of biological role, is responsible for transferring galactose-1-phosphate to the lipid precursor undecaprenol phosphate in the first steps of O-polysaccharide biosynthesis. This is Undecaprenyl-phosphate galactose phosphotransferase (rfbP) from Salmonella typhimurium (strain LT2 / SGSC1412 / ATCC 700720).